The following is a 141-amino-acid chain: Oleosin 14.9 kDa (141 aa).

Positions 1–22 (MADQTRTHHEMISRDSTQEAHP) are enriched in basic and acidic residues. The segment at 1–24 (MADQTRTHHEMISRDSTQEAHPKA) is disordered. Positions 1–29 (MADQTRTHHEMISRDSTQEAHPKARQMVK) are polar. Positions 30–141 (AATAVTAGGS…NIGVQHQQVS (112 aa)) are hydrophobic. 3 helical membrane passes run 38–58 (GSLLVLSGLTLAGTVIALTVA), 60–80 (PLLVIFSPVLVPAVVTVALII), and 81–101 (TGFLASGGFGIAAITAFSWLY).

Belongs to the oleosin family.

It localises to the lipid droplet. It is found in the membrane. Functionally, may have a structural role to stabilize the lipid body during desiccation of the seed by preventing coalescence of the oil. Probably interacts with both lipid and phospholipid moieties of lipid bodies. May also provide recognition signals for specific lipase anchorage in lipolysis during seedling growth. The protein is Oleosin 14.9 kDa (OL3) of Arabidopsis thaliana (Mouse-ear cress).